A 436-amino-acid polypeptide reads, in one-letter code: MMHYDVAVIGGGIAGYSAALRALQAGKKVVLINQGQSALHFSSGSIDVLGRLPDGSVVNQPFDALSALQQQVPEHPYSKVGRKNSEKGLMWFKRTLDSAHVPLHHEPDGANHWRITPLGTLKNTWLSQPFVYPYRGNADFSRIVIVAIDGYRDFQPAMLRDNLAQRPELANTPMLTVNVSIPGFEGFRRNPNELRSIDIARLLRQESAWNALCDQLMRVARPDDLVIMPAIMGNGDGLHLMTKLQQVTQLRFHEVPTMPPSLLGIRIEEALHRSFIQGGGVQLKGDKVIGGDFAGSRLTAIHTQNLRDFPISAEHYVMATGSYFSQGLQASQHAIQEPTFALDVQQNPDRAQWRHAQFIAAQSHPFMTFGVITDANLHPSRQGKTIDNLWCCGAMLSGYDPVFEGCGGGVAIATAYHAVEQILATYAQTKQPEVLL.

This sequence belongs to the anaerobic G-3-P dehydrogenase subunit B family. As to quaternary structure, composed of a catalytic GlpA/B dimer and of membrane bound GlpC. Requires FMN as cofactor.

The enzyme catalyses a quinone + sn-glycerol 3-phosphate = dihydroxyacetone phosphate + a quinol. Its pathway is polyol metabolism; glycerol degradation via glycerol kinase pathway; glycerone phosphate from sn-glycerol 3-phosphate (anaerobic route): step 1/1. Conversion of glycerol 3-phosphate to dihydroxyacetone. Uses fumarate or nitrate as electron acceptor. This Vibrio cholerae serotype O1 (strain ATCC 39541 / Classical Ogawa 395 / O395) protein is Anaerobic glycerol-3-phosphate dehydrogenase subunit B.